The sequence spans 290 residues: Fructose-1,6-bisphosphatase class 1 (290 aa).

The Mg(2+) site is built by Glu78, Asp96, Leu98, and Asp99. Substrate is bound by residues 99-102 (DGSS), Tyr201, and Lys226. Position 232 (Glu232) interacts with Mg(2+).

This sequence belongs to the FBPase class 1 family. In terms of assembly, homotetramer. Mg(2+) is required as a cofactor.

It is found in the cytoplasm. The enzyme catalyses beta-D-fructose 1,6-bisphosphate + H2O = beta-D-fructose 6-phosphate + phosphate. Its pathway is carbohydrate biosynthesis; gluconeogenesis. This is Fructose-1,6-bisphosphatase class 1 from Helicobacter pylori (strain HPAG1).